The sequence spans 380 residues: Cytochrome b (380 aa).

A run of 4 helical transmembrane segments spans residues 34 to 54 (FGSLLGICLTTQILTGLLLAM), 78 to 99 (WLIRNMHANGASLLFICIYLHI), 114 to 134 (WNTGVILLLTLMATAFVGYVL), and 179 to 199 (FFALHFLLPFMITGLTLIHLT). H84 and H98 together coordinate heme b. Positions 183 and 197 each coordinate heme b. H202 serves as a coordination point for a ubiquinone. Helical transmembrane passes span 227–247 (TKDILGFTLMLLPLTTLALFS), 289–309 (LGGVLALAASVLVLFLSPLLH), 321–341 (LSQLLFWTLVANLLILTWIGS), and 348–368 (FIIIGQLASTTYFIILLILFP).

This sequence belongs to the cytochrome b family. The cytochrome bc1 complex contains 11 subunits: 3 respiratory subunits (MT-CYB, CYC1 and UQCRFS1), 2 core proteins (UQCRC1 and UQCRC2) and 6 low-molecular weight proteins (UQCRH/QCR6, UQCRB/QCR7, UQCRQ/QCR8, UQCR10/QCR9, UQCR11/QCR10 and a cleavage product of UQCRFS1). This cytochrome bc1 complex then forms a dimer. It depends on heme b as a cofactor.

It localises to the mitochondrion inner membrane. Component of the ubiquinol-cytochrome c reductase complex (complex III or cytochrome b-c1 complex) that is part of the mitochondrial respiratory chain. The b-c1 complex mediates electron transfer from ubiquinol to cytochrome c. Contributes to the generation of a proton gradient across the mitochondrial membrane that is then used for ATP synthesis. The chain is Cytochrome b (MT-CYB) from Pygoscelis antarcticus (Chinstrap penguin).